The chain runs to 230 residues: MSGAAFPSPTAEIAEMNRIHYELEYTEGISQRMRIPEQLKVAPYGSEDQELPDHELLHTAMMHVPERIIVAGHSDDMPFPRDLDLIQSTPQESTLSLKTPPRVLTLSDRPLDFLEMEQTSSVSHPSEEVRTQTKTRRERSVSENAGVHHNGPLARNDSAFALATLDSTLEGGTDDMAVVDATSLRRQIVKLNRRLQLLEEENKERAKREMVMYSITVAFWLVNSWVWFRR.

The Cytoplasmic segment spans residues 1-210; it reads MSGAAFPSPT…ENKERAKREM (210 aa). The interval 117–153 is disordered; sequence EQTSSVSHPSEEVRTQTKTRRERSVSENAGVHHNGPL. Serine 142 is modified (phosphoserine). Residues 179-210 adopt a coiled-coil conformation; the sequence is VDATSLRRQIVKLNRRLQLLEEENKERAKREM. A helical; Anchor for type IV membrane protein membrane pass occupies residues 211-228; it reads VMYSITVAFWLVNSWVWF. Topologically, residues 229-230 are extracellular; sequence RR.

The protein belongs to the Tango11 family.

The protein localises to the mitochondrion outer membrane. It is found in the peroxisome. Its function is as follows. Plays a role in mitochondrial and peroxisomal fission. Promotes the recruitment and association of the fission mediator dynamin-related protein 1 (DNM1L) to the mitochondrial surface. This Danio rerio (Zebrafish) protein is Mitochondrial fission factor homolog B.